A 183-amino-acid chain; its full sequence is ATP-dependent protease subunit HslV (183 aa).

Residue Thr2 is part of the active site. Positions 157, 160, and 163 each coordinate Na(+).

This sequence belongs to the peptidase T1B family. HslV subfamily. In terms of assembly, a double ring-shaped homohexamer of HslV is capped on each side by a ring-shaped HslU homohexamer. The assembly of the HslU/HslV complex is dependent on binding of ATP.

It is found in the cytoplasm. The catalysed reaction is ATP-dependent cleavage of peptide bonds with broad specificity.. Its activity is regulated as follows. Allosterically activated by HslU binding. Protease subunit of a proteasome-like degradation complex believed to be a general protein degrading machinery. In Vibrio parahaemolyticus serotype O3:K6 (strain RIMD 2210633), this protein is ATP-dependent protease subunit HslV.